The sequence spans 357 residues: Protein RecA (357 aa).

An ATP-binding site is contributed by 67-74 (GPESSGKT). Residues 335–357 (LASSASDDESTEGNIDLETGEIF) are disordered.

The protein belongs to the RecA family.

The protein resides in the cytoplasm. Can catalyze the hydrolysis of ATP in the presence of single-stranded DNA, the ATP-dependent uptake of single-stranded DNA by duplex DNA, and the ATP-dependent hybridization of homologous single-stranded DNAs. It interacts with LexA causing its activation and leading to its autocatalytic cleavage. This is Protein RecA from Shewanella putrefaciens (strain CN-32 / ATCC BAA-453).